The sequence spans 866 residues: Probable outer membrane usher protein ElfC (866 aa).

Positions 1–35 (MYRTHRQHSLLSSGGVPSFIGGLVVFVSAAFNAQA) are cleaved as a signal peptide.

The protein belongs to the fimbrial export usher family.

It is found in the cell outer membrane. Functionally, part of the elfADCG-ycbUVF fimbrial operon, which promotes adhesion of bacteria to different abiotic surfaces. Could be involved in the export and assembly of the ElfA fimbrial subunits across the outer membrane. This is Probable outer membrane usher protein ElfC (elfC) from Escherichia coli (strain K12).